The sequence spans 96 residues: Essential MCU regulator, mitochondrial (96 aa).

Residues 1 to 34 (MIVSRLTFPLQAAKLVARKAAGNPSNSIIQRRHM) constitute a mitochondrion transit peptide. A helical membrane pass occupies residues 52 to 72 (PFGLFAIFCAVIPGLFIGATI).

This sequence belongs to the SMDT1/EMRE family.

Its subcellular location is the mitochondrion inner membrane. In terms of biological role, essential regulatory subunit of the mitochondrial calcium uniporter (mcu) channel, a protein that mediates calcium uptake into mitochondria. This chain is Essential MCU regulator, mitochondrial, found in Drosophila pseudoobscura pseudoobscura (Fruit fly).